We begin with the raw amino-acid sequence, 368 residues long: Alkaline phosphatase L (368 aa).

A signal peptide spans 1-23 (MFKRSLIAASLSVAALVSAQAMA).

This sequence belongs to the PstS family. In terms of assembly, homodimer.

It is found in the secreted. The protein resides in the periplasm. The enzyme catalyses a phosphate monoester + H2O = an alcohol + phosphate. Has both a phosphomonoesterase and phosphodiesterase activity. This chain is Alkaline phosphatase L, found in Pseudomonas aeruginosa (strain ATCC 15692 / DSM 22644 / CIP 104116 / JCM 14847 / LMG 12228 / 1C / PRS 101 / PAO1).